The following is a 115-amino-acid chain: Cholecystokinin (115 aa).

Positions 1–20 (MNSGVCLCVLMAVLAAGALT) are cleaved as a signal peptide. Positions 21-44 (QPVPPADPAGSGLQRAEEAPRRQL) are excised as a propeptide. Residues 23 to 52 (VPPADPAGSGLQRAEEAPRRQLRVSQRTDG) are disordered. Residue serine 31 is glycosylated (O-linked (Xyl...) (chondroitin sulfate) serine). Sulfotyrosine is present on tyrosine 97. The residue at position 103 (phenylalanine 103) is a Phenylalanine amide. The propeptide occupies 107–115 (SAEEYEYPS). Tyrosine 111 and tyrosine 113 each carry sulfotyrosine.

The protein belongs to the gastrin/cholecystokinin family. Binds to CCK-A receptors in the pancreas and CCK-B receptors in the brain. Post-translationally, the precursor is cleaved by proteases to produce a number of active cholecystokinins. In terms of processing, the precursor is cleaved by ACE, which removes the Gly-Arg-Arg peptide at the C-terminus, leading to mature hormone. In terms of tissue distribution, detected in cerebrospinal fluid and urine (at protein level).

The protein resides in the secreted. Functionally, this peptide hormone induces gall bladder contraction and the release of pancreatic enzymes in the gut. Its function in the brain is not clear. Binding to CCK-A receptors stimulates amylase release from the pancreas, binding to CCK-B receptors stimulates gastric acid secretion. In Homo sapiens (Human), this protein is Cholecystokinin (CCK).